Here is a 92-residue protein sequence, read N- to C-terminus: Acylphosphatase (92 aa).

Cys5 and Cys49 are oxidised to a cystine. The 88-residue stretch at 5-92 (CIIAWVYGRV…SGELTDFRIR (88 aa)) folds into the Acylphosphatase-like domain. Catalysis depends on residues Arg20 and Asn38.

Belongs to the acylphosphatase family.

It carries out the reaction an acyl phosphate + H2O = a carboxylate + phosphate + H(+). This is Acylphosphatase from Escherichia coli O157:H7.